A 521-amino-acid chain; its full sequence is Cholesterol side-chain cleavage enzyme, mitochondrial (521 aa).

Residues 1 to 39 constitute a mitochondrion transit peptide; sequence MLAKGLPPRSVLVKGCQTFLSAPREGLGRLRVPTGEGAG. Cys-462 serves as a coordination point for heme.

It belongs to the cytochrome P450 family. In terms of assembly, interacts with FDX1/adrenodoxin. Requires heme as cofactor.

The protein localises to the mitochondrion inner membrane. The catalysed reaction is 6 reduced [adrenodoxin] + cholesterol + 3 O2 + 6 H(+) = 4-methylpentanal + pregnenolone + 6 oxidized [adrenodoxin] + 4 H2O. The enzyme catalyses 2 reduced [adrenodoxin] + cholesterol + O2 + 2 H(+) = (22R)-hydroxycholesterol + 2 oxidized [adrenodoxin] + H2O. It catalyses the reaction (22R)-hydroxycholesterol + 2 reduced [adrenodoxin] + O2 + 2 H(+) = (20R,22R)-20,22-dihydroxycholesterol + 2 oxidized [adrenodoxin] + H2O. It carries out the reaction (20R,22R)-20,22-dihydroxycholesterol + 2 reduced [adrenodoxin] + O2 + 2 H(+) = 4-methylpentanal + pregnenolone + 2 oxidized [adrenodoxin] + 2 H2O. It functions in the pathway lipid metabolism; C21-steroid hormone metabolism. Its pathway is steroid metabolism; cholesterol metabolism. Functionally, a cytochrome P450 monooxygenase that catalyzes the side-chain hydroxylation and cleavage of cholesterol to pregnenolone, the precursor of most steroid hormones. Catalyzes three sequential oxidation reactions of cholesterol, namely the hydroxylation at C22 followed with the hydroxylation at C20 to yield 20R,22R-hydroxycholesterol that is further cleaved between C20 and C22 to yield the C21-steroid pregnenolone and 4-methylpentanal. Mechanistically, uses molecular oxygen inserting one oxygen atom into a substrate and reducing the second into a water molecule. Two electrons are provided by NADPH via a two-protein mitochondrial transfer system comprising flavoprotein FDXR (adrenodoxin/ferredoxin reductase) and nonheme iron-sulfur protein FDX1 or FDX2 (adrenodoxin/ferredoxin). The sequence is that of Cholesterol side-chain cleavage enzyme, mitochondrial from Homo sapiens (Human).